The sequence spans 157 residues: DNA gyrase inhibitor (157 aa).

Belongs to the DNA gyrase inhibitor family. In terms of assembly, interacts with DNA gyrase.

Its subcellular location is the cytoplasm. In terms of biological role, inhibits the supercoiling activity of DNA gyrase. Acts by inhibiting DNA gyrase at an early step, prior to (or at the step of) binding of DNA by the gyrase. It protects cells against toxins that target DNA gyrase, by inhibiting activity of these toxins and reducing the formation of lethal double-strand breaks in the cell. The chain is DNA gyrase inhibitor from Yersinia enterocolitica serotype O:8 / biotype 1B (strain NCTC 13174 / 8081).